Consider the following 313-residue polypeptide: Ribosomal RNA small subunit methyltransferase H (313 aa).

Residues 37 to 39 (GGH), Asp57, Phe82, Asp104, and Gln111 contribute to the S-adenosyl-L-methionine site.

It belongs to the methyltransferase superfamily. RsmH family.

It is found in the cytoplasm. The catalysed reaction is cytidine(1402) in 16S rRNA + S-adenosyl-L-methionine = N(4)-methylcytidine(1402) in 16S rRNA + S-adenosyl-L-homocysteine + H(+). Functionally, specifically methylates the N4 position of cytidine in position 1402 (C1402) of 16S rRNA. This Alteromonas mediterranea (strain DSM 17117 / CIP 110805 / LMG 28347 / Deep ecotype) protein is Ribosomal RNA small subunit methyltransferase H.